The chain runs to 573 residues: Isocitrate dehydrogenase kinase/phosphatase (573 aa).

ATP-binding positions include alanine 317–methionine 323 and lysine 338. Residue aspartate 373 is part of the active site.

It belongs to the AceK family.

The protein resides in the cytoplasm. The catalysed reaction is L-seryl-[isocitrate dehydrogenase] + ATP = O-phospho-L-seryl-[isocitrate dehydrogenase] + ADP + H(+). Functionally, bifunctional enzyme which can phosphorylate or dephosphorylate isocitrate dehydrogenase (IDH) on a specific serine residue. This is a regulatory mechanism which enables bacteria to bypass the Krebs cycle via the glyoxylate shunt in response to the source of carbon. When bacteria are grown on glucose, IDH is fully active and unphosphorylated, but when grown on acetate or ethanol, the activity of IDH declines drastically concomitant with its phosphorylation. The polypeptide is Isocitrate dehydrogenase kinase/phosphatase (Pseudomonas fluorescens (strain Pf0-1)).